We begin with the raw amino-acid sequence, 288 residues long: 4-diphosphocytidyl-2-C-methyl-D-erythritol kinase (288 aa).

The active site involves lysine 13. Proline 96–serine 106 provides a ligand contact to ATP. Residue aspartate 138 is part of the active site.

The protein belongs to the GHMP kinase family. IspE subfamily.

The catalysed reaction is 4-CDP-2-C-methyl-D-erythritol + ATP = 4-CDP-2-C-methyl-D-erythritol 2-phosphate + ADP + H(+). Its pathway is isoprenoid biosynthesis; isopentenyl diphosphate biosynthesis via DXP pathway; isopentenyl diphosphate from 1-deoxy-D-xylulose 5-phosphate: step 3/6. Catalyzes the phosphorylation of the position 2 hydroxy group of 4-diphosphocytidyl-2C-methyl-D-erythritol. In Aliivibrio fischeri (strain ATCC 700601 / ES114) (Vibrio fischeri), this protein is 4-diphosphocytidyl-2-C-methyl-D-erythritol kinase.